A 374-amino-acid chain; its full sequence is Eukaryotic translation initiation factor 3 subunit M (374 aa).

S2 bears the N-acetylserine mark. S2 and S152 each carry phosphoserine. Residues 180–339 (AASKVMVELL…RKVVVSHSTH (160 aa)) enclose the PCI domain. Residue K254 is modified to N6-acetyllysine. The segment at 344-374 (KQQWQQLYDTLNAWKQNLNKVKNSLLSLSDT) is interaction with HSV-1 and HSV-2. Position 367 is a phosphoserine (S367).

Component of the eukaryotic translation initiation factor 3 (eIF-3) complex, which is composed of 13 subunits: EIF3A, EIF3B, EIF3C, EIF3D, EIF3E, EIF3F, EIF3G, EIF3H, EIF3I, EIF3J, EIF3K, EIF3L and EIF3M. The eIF-3 complex appears to include 3 stable modules: module A is composed of EIF3A, EIF3B, EIF3G and EIF3I; module B is composed of EIF3F, EIF3H, and EIF3M; and module C is composed of EIF3C, EIF3D, EIF3E, EIF3K and EIF3L. EIF3C of module C binds EIF3B of module A and EIF3H of module B, thereby linking the three modules. EIF3J is a labile subunit that binds to the eIF-3 complex via EIF3B. The eIF-3 complex interacts with RPS6KB1 under conditions of nutrient depletion. Mitogenic stimulation leads to binding and activation of a complex composed of MTOR and RPTOR, leading to phosphorylation and release of RPS6KB1 and binding of EIF4B to eIF-3. In terms of tissue distribution, broadly expressed.

It is found in the cytoplasm. Component of the eukaryotic translation initiation factor 3 (eIF-3) complex, which is required for several steps in the initiation of protein synthesis. The eIF-3 complex associates with the 40S ribosome and facilitates the recruitment of eIF-1, eIF-1A, eIF-2:GTP:methionyl-tRNAi and eIF-5 to form the 43S pre-initiation complex (43S PIC). The eIF-3 complex stimulates mRNA recruitment to the 43S PIC and scanning of the mRNA for AUG recognition. The eIF-3 complex is also required for disassembly and recycling of post-termination ribosomal complexes and subsequently prevents premature joining of the 40S and 60S ribosomal subunits prior to initiation. The eIF-3 complex specifically targets and initiates translation of a subset of mRNAs involved in cell proliferation, including cell cycling, differentiation and apoptosis, and uses different modes of RNA stem-loop binding to exert either translational activation or repression. Functionally, (Microbial infection) May favor virus entry in case of infection with herpes simplex virus 1 (HSV1) or herpes simplex virus 2 (HSV2). The protein is Eukaryotic translation initiation factor 3 subunit M of Homo sapiens (Human).